Reading from the N-terminus, the 65-residue chain is Large ribosomal subunit protein bL33m (65 aa).

A mitochondrion-targeting transit peptide spans 1–8 (MFLSAVTF).

The protein belongs to the bacterial ribosomal protein bL33 family. As to quaternary structure, component of the mitochondrial ribosome large subunit (39S) which comprises a 16S rRNA and about 50 distinct proteins.

It is found in the mitochondrion. This chain is Large ribosomal subunit protein bL33m (MRPL33), found in Bos taurus (Bovine).